We begin with the raw amino-acid sequence, 410 residues long: Replication factor C large subunit (410 aa).

46 to 53 contributes to the ATP binding site; it reads GDPGTGKT.

Belongs to the activator 1 small subunits family. RfcL subfamily. In terms of assembly, heteromultimer composed of small subunits (RfcS) and large subunits (RfcL).

In terms of biological role, part of the RFC clamp loader complex which loads the PCNA sliding clamp onto DNA. The protein is Replication factor C large subunit of Picrophilus torridus (strain ATCC 700027 / DSM 9790 / JCM 10055 / NBRC 100828 / KAW 2/3).